Reading from the N-terminus, the 292-residue chain is 33 kDa chaperonin (292 aa).

Disulfide bonds link Cys-230/Cys-232 and Cys-263/Cys-266.

Belongs to the HSP33 family. In terms of processing, under oxidizing conditions two disulfide bonds are formed involving the reactive cysteines. Under reducing conditions zinc is bound to the reactive cysteines and the protein is inactive.

It localises to the cytoplasm. Functionally, redox regulated molecular chaperone. Protects both thermally unfolding and oxidatively damaged proteins from irreversible aggregation. Plays an important role in the bacterial defense system toward oxidative stress. This is 33 kDa chaperonin from Cronobacter sakazakii (strain ATCC BAA-894) (Enterobacter sakazakii).